Here is a 154-residue protein sequence, read N- to C-terminus: UPF0178 protein in pahZ1 5'region (154 aa).

It belongs to the UPF0178 family.

The chain is UPF0178 protein in pahZ1 5'region from Paucimonas lemoignei (Pseudomonas lemoignei).